Reading from the N-terminus, the 407-residue chain is Multifunctional CCA protein (407 aa).

ATP contacts are provided by Gly-8 and Arg-11. Positions 8 and 11 each coordinate CTP. Mg(2+) contacts are provided by Asp-21 and Asp-23. ATP is bound by residues Arg-91, Arg-137, and Arg-140. Arg-91, Arg-137, and Arg-140 together coordinate CTP. The HD domain occupies 228-329; the sequence is SGIHTLMVAQ…IKIFDKMDVW (102 aa).

Belongs to the tRNA nucleotidyltransferase/poly(A) polymerase family. Bacterial CCA-adding enzyme type 1 subfamily. As to quaternary structure, monomer. Can also form homodimers and oligomers. The cofactor is Mg(2+). Ni(2+) is required as a cofactor.

The catalysed reaction is a tRNA precursor + 2 CTP + ATP = a tRNA with a 3' CCA end + 3 diphosphate. It catalyses the reaction a tRNA with a 3' CCA end + 2 CTP + ATP = a tRNA with a 3' CCACCA end + 3 diphosphate. Its function is as follows. Catalyzes the addition and repair of the essential 3'-terminal CCA sequence in tRNAs without using a nucleic acid template. Adds these three nucleotides in the order of C, C, and A to the tRNA nucleotide-73, using CTP and ATP as substrates and producing inorganic pyrophosphate. tRNA 3'-terminal CCA addition is required both for tRNA processing and repair. Also involved in tRNA surveillance by mediating tandem CCA addition to generate a CCACCA at the 3' terminus of unstable tRNAs. While stable tRNAs receive only 3'-terminal CCA, unstable tRNAs are marked with CCACCA and rapidly degraded. The chain is Multifunctional CCA protein from Aliivibrio fischeri (strain MJ11) (Vibrio fischeri).